A 145-amino-acid chain; its full sequence is NADH-quinone oxidoreductase subunit A (145 aa).

Helical transmembrane passes span 14 to 34 (FAVF…GAWF), 66 to 86 (FYLV…LYAW), and 96 to 116 (VGFV…FYLV).

Belongs to the complex I subunit 3 family. As to quaternary structure, NDH-1 is composed of 13 different subunits. Subunits NuoA, H, J, K, L, M, N constitute the membrane sector of the complex.

The protein localises to the cell inner membrane. It catalyses the reaction a quinone + NADH + 5 H(+)(in) = a quinol + NAD(+) + 4 H(+)(out). In terms of biological role, NDH-1 shuttles electrons from NADH, via FMN and iron-sulfur (Fe-S) centers, to quinones in the respiratory chain. The immediate electron acceptor for the enzyme in this species is believed to be ubiquinone. Couples the redox reaction to proton translocation (for every two electrons transferred, four hydrogen ions are translocated across the cytoplasmic membrane), and thus conserves the redox energy in a proton gradient. The protein is NADH-quinone oxidoreductase subunit A of Erwinia tasmaniensis (strain DSM 17950 / CFBP 7177 / CIP 109463 / NCPPB 4357 / Et1/99).